The chain runs to 234 residues: Sugar fermentation stimulation protein homolog (234 aa).

It belongs to the SfsA family.

This Idiomarina loihiensis (strain ATCC BAA-735 / DSM 15497 / L2-TR) protein is Sugar fermentation stimulation protein homolog.